Consider the following 139-residue polypeptide: Putative pre-16S rRNA nuclease (139 aa).

This sequence belongs to the YqgF nuclease family.

It localises to the cytoplasm. Functionally, could be a nuclease involved in processing of the 5'-end of pre-16S rRNA. This chain is Putative pre-16S rRNA nuclease, found in Streptococcus mutans serotype c (strain ATCC 700610 / UA159).